Reading from the N-terminus, the 245-residue chain is 1-(5-phosphoribosyl)-5-[(5-phosphoribosylamino)methylideneamino] imidazole-4-carboxamide isomerase (245 aa).

The Proton acceptor role is filled by aspartate 7. Aspartate 129 acts as the Proton donor in catalysis.

The protein belongs to the HisA/HisF family.

The protein localises to the cytoplasm. It carries out the reaction 1-(5-phospho-beta-D-ribosyl)-5-[(5-phospho-beta-D-ribosylamino)methylideneamino]imidazole-4-carboxamide = 5-[(5-phospho-1-deoxy-D-ribulos-1-ylimino)methylamino]-1-(5-phospho-beta-D-ribosyl)imidazole-4-carboxamide. The protein operates within amino-acid biosynthesis; L-histidine biosynthesis; L-histidine from 5-phospho-alpha-D-ribose 1-diphosphate: step 4/9. This chain is 1-(5-phosphoribosyl)-5-[(5-phosphoribosylamino)methylideneamino] imidazole-4-carboxamide isomerase, found in Shewanella baltica (strain OS155 / ATCC BAA-1091).